The following is a 331-amino-acid chain: Anthranilate phosphoribosyltransferase (331 aa).

5-phospho-alpha-D-ribose 1-diphosphate is bound by residues G79, 82-83 (GD), S87, 89-92 (NIST), 107-115 (KHCNSSISG), and S119. Residue G79 coordinates anthranilate. Residue S91 coordinates Mg(2+). N110 contributes to the anthranilate binding site. R165 is a binding site for anthranilate. Positions 223 and 224 each coordinate Mg(2+).

The protein belongs to the anthranilate phosphoribosyltransferase family. As to quaternary structure, homodimer. Mg(2+) is required as a cofactor.

The enzyme catalyses N-(5-phospho-beta-D-ribosyl)anthranilate + diphosphate = 5-phospho-alpha-D-ribose 1-diphosphate + anthranilate. The protein operates within amino-acid biosynthesis; L-tryptophan biosynthesis; L-tryptophan from chorismate: step 2/5. Functionally, catalyzes the transfer of the phosphoribosyl group of 5-phosphorylribose-1-pyrophosphate (PRPP) to anthranilate to yield N-(5'-phosphoribosyl)-anthranilate (PRA). The sequence is that of Anthranilate phosphoribosyltransferase from Buchnera aphidicola subsp. Melaphis rhois.